Reading from the N-terminus, the 299-residue chain is Taste receptor type 2 member 1 (299 aa).

Residues 1 to 9 lie on the Extracellular side of the membrane; it reads MLESHLIIH. A helical membrane pass occupies residues 10–30; the sequence is FLLAVIQFLLGTFTNGIIVVV. The Cytoplasmic portion of the chain corresponds to 31-55; it reads NGIDLIKHRKMAPLDLLLSCLAVSR. Residues 56–76 traverse the membrane as a helical segment; that stretch reads IFLQLFIFYVNVIVIFFIEFI. Residues 77-81 lie on the Extracellular side of the membrane; it reads MCSEN. Residues 82–102 form a helical membrane-spanning segment; that stretch reads CAILLFINELELWLATWLGVF. Over 103–124 the chain is Cytoplasmic; it reads YCAKVASVPHPLFIWLKMKISK. A helical transmembrane segment spans residues 125–145; sequence LVPWMILGSLLYVSMTCVFHS. Residues 146 to 178 lie on the Extracellular side of the membrane; sequence KYAGFMVPYFLRNFFSQNATIQKEDTPAIQIFS. An N-linked (GlcNAc...) asparagine glycan is attached at N163. The chain crosses the membrane as a helical span at residues 179-199; sequence FVAEFLVPLLIFLVAVLLLIF. The Cytoplasmic portion of the chain corresponds to 200–222; that stretch reads SLGRHTRQMRNTVAGSRVPGRGA. The helical transmembrane segment at 223-243 threads the bilayer; sequence PISALLSILSFVILYFSHCMI. Over 244–257 the chain is Extracellular; the sequence is KVFLSSLKFHVRSF. A helical transmembrane segment spans residues 258–278; sequence ILPFFILVIGIYPSGHSLILI. At 279–299 the chain is on the cytoplasmic side; it reads LGNXKLKQNAKKFLLHSKCCQ.

This sequence belongs to the G-protein coupled receptor T2R family.

The protein localises to the membrane. Functionally, receptor that may play a role in the perception of bitterness and is gustducin-linked. May play a role in sensing the chemical composition of the gastrointestinal content. The activity of this receptor may stimulate alpha gustducin, mediate PLC-beta-2 activation and lead to the gating of TRPM5. This is Taste receptor type 2 member 1 (TAS2R1) from Pongo pygmaeus (Bornean orangutan).